A 211-amino-acid chain; its full sequence is MPHLLHIDSSLAPEGSVSRGVAEAYAESWRKHHPDGTLTHRDLATSPPPHLNWALVSGGQTPPEQRTPEQAEAVKIREEYLEEVESADEYVISVPMYNYAYPSTIKAWLDQVIVMGRTAGGTAGDGVLAGRKVTVITAQGGSYAPGAPKEGWDHQVPYLRHAFEALGADNIEFITVVMTLSKVNPALAAFTDVFEASRTAAEQTARDRAAA.

Residues S10 and 16–18 each bind FMN; that span reads SVS.

It belongs to the azoreductase type 1 family. Homodimer. FMN serves as cofactor.

It catalyses the reaction 2 a quinone + NADH + H(+) = 2 a 1,4-benzosemiquinone + NAD(+). The catalysed reaction is N,N-dimethyl-1,4-phenylenediamine + anthranilate + 2 NAD(+) = 2-(4-dimethylaminophenyl)diazenylbenzoate + 2 NADH + 2 H(+). Functionally, quinone reductase that provides resistance to thiol-specific stress caused by electrophilic quinones. Its function is as follows. Also exhibits azoreductase activity. Catalyzes the reductive cleavage of the azo bond in aromatic azo compounds to the corresponding amines. This chain is FMN-dependent NADH:quinone oxidoreductase, found in Parafrankia sp. (strain EAN1pec).